Here is a 119-residue protein sequence, read N- to C-terminus: Beta-2-microglobulin (119 aa).

Residues Met1 to Ala20 form the signal peptide. An Ig-like C1-type domain is found at Pro25–Lys114. Cysteines 45 and 100 form a disulfide.

Belongs to the beta-2-microglobulin family. In terms of assembly, heterodimer of an alpha chain and a beta chain. Beta-2-microglobulin is the beta-chain of major histocompatibility complex class I molecules.

Its subcellular location is the secreted. Functionally, component of the class I major histocompatibility complex (MHC). Involved in the presentation of peptide antigens to the immune system. This is Beta-2-microglobulin (B2M) from Callimico goeldii (Goeldi's marmoset).